Reading from the N-terminus, the 642-residue chain is Fork head protein homolog 2 (642 aa).

Residues 1–23 form a disordered region; that stretch reads MTVRRLESKSEHISDDEERKEQL. The region spanning 96 to 160 is the FHA domain; sequence IILGREPANP…NGIKVDGKLF (65 aa). The segment at residues 223–318 is a DNA-binding region (fork-head); sequence KPPYSYSVMI…AKTRKTPRKR (96 aa). The segment covering 310–319 has biased composition (basic residues); the sequence is KTRKTPRKRS. 3 disordered regions span residues 310 to 392, 519 to 574, and 586 to 642; these read KTRK…ETYK, VSDS…TEEN, and ATME…KSSA. A phosphoserine mark is found at serine 319, serine 321, serine 322, serine 334, and serine 336. Residues 348 to 362 show a composition bias toward low complexity; that stretch reads TSIPAAEPASSTTSA. Composition is skewed to polar residues over residues 363 to 381, 519 to 552, and 599 to 642; these read RDQTPSTPKDVGSPSTAET, VSDSPTMNLANSNSKSSPVAVQRVSTLPQASANK, and TPTS…KSSA. A phosphoserine mark is found at serine 375, serine 535, and serine 626.

Post-translationally, phosphorylated. Occurs periodically during mitosis.

The protein resides in the nucleus. Its function is as follows. Required for promoter sequence element PCB-driven, M-phase-specific transcription. Acts as a transcriptional activator with a role in the regulation of mitosis. Binds, cooperatively with mcm1, the CLB cluster regulatory elements throughout the cell cycle. Regulates the periodic transcription of cdc15 and spo12. Required for the correct timing, positioning and contraction of the division septum. In Schizosaccharomyces pombe (strain 972 / ATCC 24843) (Fission yeast), this protein is Fork head protein homolog 2 (fkh2).